The primary structure comprises 80 residues: Small ribosomal subunit protein bS18A (80 aa).

The protein belongs to the bacterial ribosomal protein bS18 family. Part of the 30S ribosomal subunit. Forms a tight heterodimer with protein bS6.

In terms of biological role, binds as a heterodimer with protein bS6 to the central domain of the 16S rRNA, where it helps stabilize the platform of the 30S subunit. This is Small ribosomal subunit protein bS18A from Rhodococcus jostii (strain RHA1).